Consider the following 61-residue polypeptide: Large ribosomal subunit protein uL29 (61 aa).

Belongs to the universal ribosomal protein uL29 family.

The polypeptide is Large ribosomal subunit protein uL29 (Nitratidesulfovibrio vulgaris (strain ATCC 29579 / DSM 644 / CCUG 34227 / NCIMB 8303 / VKM B-1760 / Hildenborough) (Desulfovibrio vulgaris)).